We begin with the raw amino-acid sequence, 216 residues long: RNA pyrophosphohydrolase (216 aa).

The Nudix hydrolase domain maps to 6-149 (GFRPNVGIIL…KRDVYQLALT (144 aa)). The Nudix box motif lies at 38–59 (GGIKYGETPMQAMYRELHEETG).

This sequence belongs to the Nudix hydrolase family. RppH subfamily. It depends on a divalent metal cation as a cofactor.

Functionally, accelerates the degradation of transcripts by removing pyrophosphate from the 5'-end of triphosphorylated RNA, leading to a more labile monophosphorylated state that can stimulate subsequent ribonuclease cleavage. This chain is RNA pyrophosphohydrolase, found in Burkholderia ambifaria (strain MC40-6).